Consider the following 279-residue polypeptide: Ribonuclease T2 protein rnst-2 (279 aa).

Positions 1–17 are cleaved as a signal peptide; the sequence is MKLLLLLCISCIPLAYS. Residues cysteine 37 and cysteine 48 are joined by a disulfide bond. Histidine 60 is an active-site residue. Asparagine 68 carries an N-linked (GlcNAc...) asparagine glycan. Residues glutamate 114 and histidine 118 contribute to the active site. A disulfide bridge connects residues cysteine 200 and cysteine 210.

The protein belongs to the RNase T2 family. Expressed in the pharynx, hypodermis, muscle cells, sheath cells, intestinal cells, the vulva and tail regions.

Its subcellular location is the lysosome. The enzyme catalyses a ribonucleotidyl-ribonucleotide-RNA + H2O = a 3'-end 3'-phospho-ribonucleotide-RNA + a 5'-end dephospho-ribonucleoside-RNA + H(+). In terms of biological role, probable endoribonuclease involved in the autophagy-mediated degradation of ribosomal RNA and ribosomal proteins in lysosomes. In Caenorhabditis elegans, this protein is Ribonuclease T2 protein rnst-2.